A 145-amino-acid chain; its full sequence is Bacilliredoxin SSP1241 (145 aa).

The protein belongs to the bacilliredoxin family.

This Staphylococcus saprophyticus subsp. saprophyticus (strain ATCC 15305 / DSM 20229 / NCIMB 8711 / NCTC 7292 / S-41) protein is Bacilliredoxin SSP1241.